Here is an 861-residue protein sequence, read N- to C-terminus: ToMV resistance protein Tm-2(GCR236) (861 aa).

The stretch at 63 to 83 (VKNLLKDIQELAGDVEDLLDD) forms a coiled coil. Positions 162–388 (DDFNMLQAKL…LESMGHKVQD (227 aa)) constitute an NB-ARC domain. 185 to 192 (GMPGLGKT) contacts ATP. LRR repeat units lie at residues 225 to 248 (LDIAKQIGLTEQKMKENLEDNLRS), 305 to 327 (LHALQPLESEKSFELFTKKIFNF), 388 to 411 (DGCAKVLALSYNDLPIASRPCFLY), 449 to 472 (LAEDVLNDLVSRNLIQLAKRTYNG), 510 to 536 (VARLRRITFYSDNVMIEFFRSNPKLEK), 585 to 608 (MTCLRYLRLEGNICGKLPNSIVKL), 609 to 631 (TRLETIDIDRRSLIQPPSGVWES), 652 to 680 (ISSFYPNIYSLHPNNLQTLMWIPDKFFEP), 689 to 710 (LRKLGILGVSNSTVKMLSIFSP), 712 to 735 (LKALEVLKLSFSSDPSEQIKLSSY), 736 to 758 (PHIAKLHLNVNRTMALNSQSFPP), 784 to 810 (LRKLKMFICKYNEEKMDLSGEANGYSF), and 811 to 835 (PQLEVLHIHSPNGLSEVTCTDDVSM).

This sequence belongs to the disease resistance NB-LRR family. (Microbial infection) Interacts with tobamoviruses mouvement protein at the plasma membrane; this interaction triggers defense responses leading to programmed cell death. In terms of assembly, binds to HSP90 proteins; this interaction seems required for defense responses toward tobamoviruses.

Its subcellular location is the cell membrane. Functionally, inhibitor of viral mouvements which confers resistance to some tobamoviruses including tomato mosaic virus (ToMV) (e.g. isolates L, W3 and SL-1) and tobacco mosaic virus (TMV), but not to resistance-breaking isolates (e.g. B7, LT1, LII, Ltbl, ToMV2, and ToMV1-2) ToMV and tomato brown rugose fruit virus (ToBRFV). Elicits a hypersensitive reaction in response to avirulent (Avr) movement proteins from resistance inducing tobamoviruses (e.g. ToMV and TMV) strains, thus leading to programmed cell death. The sequence is that of ToMV resistance protein Tm-2(GCR236) from Solanum lycopersicum (Tomato).